The primary structure comprises 330 residues: Succinylglutamate desuccinylase (330 aa).

The Zn(2+) site is built by H53, E56, and H147. The active site involves E210.

The protein belongs to the AspA/AstE family. Succinylglutamate desuccinylase subfamily. The cofactor is Zn(2+).

It carries out the reaction N-succinyl-L-glutamate + H2O = L-glutamate + succinate. It functions in the pathway amino-acid degradation; L-arginine degradation via AST pathway; L-glutamate and succinate from L-arginine: step 5/5. Its function is as follows. Transforms N(2)-succinylglutamate into succinate and glutamate. The protein is Succinylglutamate desuccinylase of Yersinia pseudotuberculosis serotype O:1b (strain IP 31758).